A 239-amino-acid chain; its full sequence is Cytochrome b6-f complex iron-sulfur subunit 1, cyanelle (239 aa).

A cyanelle-targeting transit peptide spans 1–60 (MAFTTTAVVAPRGAKITGQSSTCAIQNGKTVAVGTSKQVGSFKPVFAAAKPAKETTFSVS). The chain crosses the membrane as a helical span at residues 81–101 (LLGAIAGPVAGAGGPFVSFLV). The 97-residue stretch at 125–221 (VSSWLETHKP…VSVLEDGVVA (97 aa)) folds into the Rieske domain. The [2Fe-2S] cluster site is built by Cys167, His169, Cys185, and His188. The cysteines at positions 172 and 187 are disulfide-linked.

It belongs to the Rieske iron-sulfur protein family. As to quaternary structure, the 4 large subunits of the cytochrome b6-f complex are cytochrome b6, subunit IV (17 kDa polypeptide, petD), cytochrome f and the Rieske protein, while the 4 small subunits are petG, petL, petM and petN. The complex functions as a dimer. The cofactor is [2Fe-2S] cluster.

The protein localises to the plastid. The protein resides in the cyanelle thylakoid membrane. It catalyses the reaction 2 oxidized [plastocyanin] + a plastoquinol + 2 H(+)(in) = 2 reduced [plastocyanin] + a plastoquinone + 4 H(+)(out). Functionally, component of the cytochrome b6-f complex, which mediates electron transfer between photosystem II (PSII) and photosystem I (PSI), cyclic electron flow around PSI, and state transitions. The chain is Cytochrome b6-f complex iron-sulfur subunit 1, cyanelle (petC-1) from Cyanophora paradoxa.